Here is a 320-residue protein sequence, read N- to C-terminus: Cytochrome f (320 aa).

The first 32 residues, 1 to 32, serve as a signal peptide directing secretion; it reads MKTKKSYDKVTRWVTPPILMLIIIHIITGACS. Heme is bound by residues tyrosine 36, cysteine 56, cysteine 59, and histidine 60. The helical transmembrane segment at 286 to 306 threads the bilayer; it reads IQGLLGFLASVVLAQIFLVLK.

It belongs to the cytochrome f family. The 4 large subunits of the cytochrome b6-f complex are cytochrome b6, subunit IV (17 kDa polypeptide, petD), cytochrome f and the Rieske protein, while the 4 small subunits are PetG, PetL, PetM and PetN. The complex functions as a dimer. Requires heme as cofactor.

It is found in the plastid. The protein resides in the chloroplast thylakoid membrane. Its function is as follows. Component of the cytochrome b6-f complex, which mediates electron transfer between photosystem II (PSII) and photosystem I (PSI), cyclic electron flow around PSI, and state transitions. The sequence is that of Cytochrome f from Gnetum parvifolium (Small-leaved jointfir).